The following is a 367-amino-acid chain: 5-amino-6-(D-ribitylamino)uracil--L-tyrosine 4-hydroxyphenyl transferase (367 aa).

A Radical SAM core domain is found at 54–288; it reads ITYIENWNIN…VYAISRLMFR (235 aa). 3 residues coordinate [4Fe-4S] cluster: Cys68, Cys72, and Cys75.

The protein belongs to the radical SAM superfamily. CofH family. In terms of assembly, consists of two subunits, CofG and CofH. [4Fe-4S] cluster serves as cofactor.

It carries out the reaction 5-amino-6-(D-ribitylamino)uracil + L-tyrosine + S-adenosyl-L-methionine = 5-amino-5-(4-hydroxybenzyl)-6-(D-ribitylimino)-5,6-dihydrouracil + 2-iminoacetate + 5'-deoxyadenosine + L-methionine + H(+). It functions in the pathway cofactor biosynthesis; coenzyme F0 biosynthesis. Functionally, catalyzes the radical-mediated synthesis of 5-amino-5-(4-hydroxybenzyl)-6-(D-ribitylimino)-5,6-dihydrouracil from 5-amino-6-(D-ribitylamino)uracil and L-tyrosine. In Methanothermobacter thermautotrophicus (strain ATCC 29096 / DSM 1053 / JCM 10044 / NBRC 100330 / Delta H) (Methanobacterium thermoautotrophicum), this protein is 5-amino-6-(D-ribitylamino)uracil--L-tyrosine 4-hydroxyphenyl transferase.